Consider the following 149-residue polypeptide: Large ribosomal subunit protein bL9 (149 aa).

Belongs to the bacterial ribosomal protein bL9 family.

Its function is as follows. Binds to the 23S rRNA. The protein is Large ribosomal subunit protein bL9 of Helicobacter pylori (strain P12).